Here is a 537-residue protein sequence, read N- to C-terminus: Putative cysteine ligase BshC (537 aa).

Positions Ile-422–Ile-450 form a coiled coil.

It belongs to the BshC family.

In terms of biological role, involved in bacillithiol (BSH) biosynthesis. May catalyze the last step of the pathway, the addition of cysteine to glucosamine malate (GlcN-Mal) to generate BSH. This Staphylococcus aureus (strain bovine RF122 / ET3-1) protein is Putative cysteine ligase BshC.